Reading from the N-terminus, the 1812-residue chain is Breast cancer type 1 susceptibility protein homolog (1812 aa).

Residue Met1 is modified to N-acetylmethionine. The RING-type zinc finger occupies 24 to 65 (CPICLELIKEPVSTKCDHIFCKFCMLKLLNQKKGPSQCPLCK). Residue Lys109 forms a Glycyl lysine isopeptide (Lys-Gly) (interchain with G-Cter in SUMO2) linkage. Ser114 is modified (phosphoserine). Over residues 165–176 (KKNRQTQPRKKS) the composition is skewed to basic residues. The interval 165 to 198 (KKNRQTQPRKKSVYIELDSDSSEETVTKPGDCSV) is disordered. Residue Lys298 forms a Glycyl lysine isopeptide (Lys-Gly) (interchain with G-Cter in SUMO2) linkage. Positions 321-332 (SKGTCNDRQVPS) are enriched in polar residues. Residues 321 to 362 (SKGTCNDRQVPSTGEKVGPNADSLSDREKWTHPQSLCPENSG) form a disordered region. A Glycyl lysine isopeptide (Lys-Gly) (interchain with G-Cter in SUMO2) cross-link involves residue Lys336. Polar residues predominate over residues 352 to 362 (HPQSLCPENSG). Position 392 is a phosphoserine (Ser392). Glycyl lysine isopeptide (Lys-Gly) (interchain with G-Cter in SUMO2) cross-links involve residues Lys440, Lys456, and Lys512. Disordered regions lie at residues 492–581 (PFTN…AKSI) and 640–767 (SEET…VSDT). Polar residues predominate over residues 538-556 (QAVSTTSNCQENKIAGSNL). 2 stretches are compositionally biased toward basic and acidic residues: residues 557-572 (QKEK…RKEP) and 669-679 (ADAKKNEPNEH). Phosphoserine is present on residues Ser686, Ser706, and Ser717. Polar residues-rich tracts occupy residues 702–733 (TSCS…QMSD) and 758–767 (STSVSLVSDT). Residue Ser831 is modified to Phosphoserine. 5 disordered regions span residues 864 to 899 (KPRS…GQEE), 947 to 995 (GLSA…STEM), 1030 to 1056 (VCST…PPLD), 1147 to 1185 (RESS…EDED), and 1205 to 1230 (CSSA…SSSD). The span at 947 to 972 (GLSATGKSGISQNSHFKQSVSPIRSS) shows a compositional bias: polar residues. Ser971 is subject to Phosphoserine; by CHEK2. A compositionally biased stretch (basic and acidic residues) spans 973–991 (IKTDNRKPLTEGRFERHTS). Phosphoserine is present on Ser992. Lys1048 participates in a covalent cross-link: Glycyl lysine isopeptide (Lys-Gly) (interchain with G-Cter in SUMO2). The span at 1151-1166 (RSPSPVTHASKSQSLH) shows a compositional bias: polar residues. Phosphoserine occurs at positions 1152, 1154, 1174, and 1180. The span at 1175 to 1185 (SEESDSTEDED) shows a compositional bias: acidic residues. At Ser1241 the chain carries Phosphoserine. A disordered region spans residues 1244–1289 (HQFSEDPRCSGSMFSSQHSAAQGSTANANSQDSNFIPPSKQRSHQC). The segment covering 1255 to 1279 (SMFSSQHSAAQGSTANANSQDSNFI) has biased composition (polar residues). Phosphoserine occurs at positions 1297 and 1303. The span at 1313 to 1323 (EEDNDQEEDSI) shows a compositional bias: acidic residues. Residues 1313 to 1343 (EEDNDQEEDSIIPDSEASGYESETNLSEDCS) are disordered. The span at 1333 to 1343 (ESETNLSEDCS) shows a compositional bias: polar residues. Ser1343 is subject to Phosphoserine. At Thr1350 the chain carries Phosphothreonine. The interaction with PALB2 stretch occupies residues 1353–1380 (RATMKYNLIKLQQEMAHLEAVLEQRGNQ). 3 positions are modified to phosphoserine: Ser1413, Ser1481, and Ser1495. A disordered region spans residues 1437–1547 (HLEGPTSGDD…AHIGTTPAST (111 aa)). Over residues 1492 to 1504 (EASSEPHNSTGQS) the composition is skewed to polar residues. Positions 1527 to 1538 (RDPESESPKEPA) are enriched in basic and acidic residues. BRCT domains are found at residues 1585–1679 (SEER…EFEV) and 1698–1797 (SREK…AYLV).

As to quaternary structure, heterodimer with BARD1. Part of the BRCA1-associated genome surveillance complex (BASC), which contains BRCA1, MSH2, MSH6, MLH1, ATM, BLM, PMS2 and the MRE11-RAD50-NBN protein (MRN) complex. This association could be a dynamic process changing throughout the cell cycle and within subnuclear domains. Component of the BRCA1-A complex, at least composed of BRCA1, BARD1, UIMC1/RAP80, ABRAXAS1, BRCC3/BRCC36, BABAM2 and BABAM1/NBA1. Interacts (via the BRCT domains) with ABRAXAS1 (phosphorylated form); this is important for recruitment to sites of DNA damage. Can form a heterotetramer with two molecules of ABRAXAS1 (phosphorylated form). Component of the BRCA1-RBBP8 complex. Interacts (via the BRCT domains) with RBBP8 ('Ser-327' phosphorylated form); the interaction ubiquitinates RBBP8, regulates CHEK1 activation, and involves RBBP8 in BRCA1-dependent G2/M checkpoint control on DNA damage. Associates with RNA polymerase II holoenzyme. Interacts with SMC1A, NELFB, DCLRE1C, CLSPN. CHEK1, CHEK2, BAP1, BRCC3, UBXN1 and PCLAF. Interacts (via BRCT domains) with BRIP1 (phosphorylated form). Interacts with FANCD2 (ubiquitinated form). Interacts with H2AX (phosphorylated on 'Ser-140'). Interacts (via the BRCT domains) with ACACA (phosphorylated form); the interaction prevents dephosphorylation of ACACA. Part of a BRCA complex containing BRCA1, BRCA2 and PALB2. Interacts directly with PALB2; the interaction is essential for its function in HRR. Interacts directly with BRCA2; the interaction occurs only in the presence of PALB2 which serves as the bridging protein. Interacts (via the BRCT domains) with LMO4; the interaction represses the transcriptional activity of BRCA1. Interacts (via the BRCT domains) with CCAR2 (via N-terminus); the interaction represses the transcriptional activator activity of BRCA1. Interacts with EXD2. Interacts (via C-terminus) with DHX9; this interaction is direct and links BRCA1 to the RNA polymerase II holoenzyme. Interacts with DNA helicase ZGRF1; the interaction is increased following DNA damage induction. Post-translationally, phosphorylated in response to IR, UV, and various stimuli that cause checkpoint activation, probably by ATM or ATR. Phosphorylation at Ser-971 by CHEK2 regulates mitotic spindle assembly. Phosphorylation by AURKA regulates centrosomal microtubule nucleation. In terms of processing, autoubiquitinated, undergoes 'Lys-6'-linked polyubiquitination. 'Lys-6'-linked polyubiquitination does not promote degradation. In terms of tissue distribution, in the embryo, expressed in otic vesicles at day 9.5. At day 10.5, this expression decreases and high levels are found in the neuroectoderm. At days 11-12.5, high levels in differentiating keratinocytes and whisker pad primordia. At days 14-17, expression also observed in kidney epithelial cells. In the adult, highest levels found in spleen, thymus, lymph nodes, epithelial organs, and alveolar and ductal epithelial cells of the mammary gland. Very low levels in brain, kidney, and skin. No expression in heart, liver or lung.

The protein resides in the nucleus. It is found in the chromosome. It localises to the cytoplasm. It catalyses the reaction S-ubiquitinyl-[E2 ubiquitin-conjugating enzyme]-L-cysteine + [acceptor protein]-L-lysine = [E2 ubiquitin-conjugating enzyme]-L-cysteine + N(6)-ubiquitinyl-[acceptor protein]-L-lysine.. It participates in protein modification; protein ubiquitination. In terms of biological role, E3 ubiquitin-protein ligase that specifically mediates the formation of 'Lys-6'-linked polyubiquitin chains and plays a central role in DNA repair by facilitating cellular responses to DNA damage. It is unclear whether it also mediates the formation of other types of polyubiquitin chains. The BRCA1-BARD1 heterodimer coordinates a diverse range of cellular pathways such as DNA damage repair, ubiquitination and transcriptional regulation to maintain genomic stability. Regulates centrosomal microtubule nucleation. Required for appropriate cell cycle arrests after ionizing irradiation in both the S-phase and the G2 phase of the cell cycle. Required for FANCD2 targeting to sites of DNA damage. Inhibits lipid synthesis by binding to inactive phosphorylated ACACA and preventing its dephosphorylation. Contributes to homologous recombination repair (HRR) via its direct interaction with PALB2, fine-tunes recombinational repair partly through its modulatory role in the PALB2-dependent loading of BRCA2-RAD51 repair machinery at DNA breaks. Component of the BRCA1-RBBP8 complex which regulates CHEK1 activation and controls cell cycle G2/M checkpoints on DNA damage via BRCA1-mediated ubiquitination of RBBP8. Acts as a transcriptional activator. In Mus musculus (Mouse), this protein is Breast cancer type 1 susceptibility protein homolog (Brca1).